A 33-amino-acid polypeptide reads, in one-letter code: Potassium channel toxin alpha-KTx 10.4 (33 aa).

3 disulfide bridges follow: Cys3/Cys22, Cys8/Cys27, and Cys12/Cys29.

This sequence belongs to the short scorpion toxin superfamily. Potassium channel inhibitor family. Alpha-KTx 10 subfamily. As to expression, expressed by the venom gland.

The protein resides in the secreted. Its function is as follows. Blocks human voltage-gated potassium channel Kv1.2/KCNA2 (IC(50)=3.6 nM) and Kv1.3/KCNA3 (IC(50)=72 nM). The sequence is that of Potassium channel toxin alpha-KTx 10.4 from Centruroides tecomanus (Scorpion).